A 290-amino-acid chain; its full sequence is 33 kDa chaperonin (290 aa).

Disulfide bonds link C235-C237 and C268-C271.

This sequence belongs to the HSP33 family. Under oxidizing conditions two disulfide bonds are formed involving the reactive cysteines. Under reducing conditions zinc is bound to the reactive cysteines and the protein is inactive.

It localises to the cytoplasm. In terms of biological role, redox regulated molecular chaperone. Protects both thermally unfolding and oxidatively damaged proteins from irreversible aggregation. Plays an important role in the bacterial defense system toward oxidative stress. The chain is 33 kDa chaperonin from Streptococcus sanguinis (strain SK36).